The sequence spans 434 residues: MESKPFTLPSQSATVLIGTQFGDEGKGKLVDYLSDQYDIVVRYQGGANAGHTICFDGKSVVLHLIPSGIFNEKCVCVIGNGVVIDPVALLEEIAKVEELGYTVKGRLFISHNAHLIMPYHKRLDALHESAQGGQKIGTTGRGIGPSYEDKFARKGIRVVDLLSPGLLQEKLRENLAEKNKLFRNIYEGDEIDVESMVREYEEFDKLMDPYITNTQLYLNRQLRQGKTVLLEGAQGCLLDVDHGTYPYVTSSSPTSGGACTGSGIAPNHIGKVIGVCKAYMTRVGNGAFPTELNDATGEMLGRVGHEFGATTGRKRRCGWIDLVAMRYSVAVNGITELALTKLDVLDGFEEIKVCNSYMLNGKEIRDFPTDHQTLSAVQPVYTTLKGWMASNAAARTFEGMCPEAREYVAFLERELEVPVTFISVGPGREETVFR.

GTP contacts are provided by residues 22 to 28 (GDEGKGK) and 50 to 52 (GHT). D23 serves as the catalytic Proton acceptor. Mg(2+) is bound by residues D23 and G50. IMP-binding positions include 23 to 26 (DEGK), 48 to 51 (NAGH), T139, R153, Q234, T249, and R313. The Proton donor role is filled by H51. Position 309 to 315 (309 to 315 (ATTGRKR)) interacts with substrate. GTP is bound by residues R315, 341–343 (KLD), and 423–425 (SVG).

The protein belongs to the adenylosuccinate synthetase family. In terms of assembly, homodimer. Requires Mg(2+) as cofactor.

It is found in the cytoplasm. It carries out the reaction IMP + L-aspartate + GTP = N(6)-(1,2-dicarboxyethyl)-AMP + GDP + phosphate + 2 H(+). The protein operates within purine metabolism; AMP biosynthesis via de novo pathway; AMP from IMP: step 1/2. In terms of biological role, plays an important role in the de novo pathway of purine nucleotide biosynthesis. Catalyzes the first committed step in the biosynthesis of AMP from IMP. The chain is Adenylosuccinate synthetase from Chlorobium luteolum (strain DSM 273 / BCRC 81028 / 2530) (Pelodictyon luteolum).